A 295-amino-acid polypeptide reads, in one-letter code: GATA zinc finger domain-containing protein 23 (295 aa).

Low complexity predominate over residues 115–126 (ASTSKTATSKNV). The segment at 115 to 240 (ASTSKTATSK…KRGRPSKIQP (126 aa)) is disordered. Over residues 127–145 (ISNIENNTNKSQPLESNDL) the composition is skewed to polar residues. Residues 146 to 163 (TPPSSKSSNSSPSTSPSK) are compositionally biased toward low complexity. Basic residues predominate over residues 164–174 (RVSKSKTRVTK). The span at 181 to 227 (STSSSGETENLTTTSTADTTATTDTADTTDGTNTRTSNTSSDDTTTE) shows a compositional bias: low complexity. The a.T hook DNA-binding region spans 229–241 (TKKRGRPSKIQPD). The GATA-type zinc-finger motif lies at 243–270 (CYVCRRTFTSYWRKGIFNDQNEDLCNPC).

In Dictyostelium discoideum (Social amoeba), this protein is GATA zinc finger domain-containing protein 23 (gtaW).